The primary structure comprises 344 residues: Dihydroorotase (344 aa).

Positions 14 and 16 each coordinate Zn(2+). Residues 16–18 (HFR) and asparagine 42 each bind substrate. Positions 100, 137, and 175 each coordinate Zn(2+). Residue lysine 100 is modified to N6-carboxylysine. Residue histidine 137 coordinates substrate. Leucine 220 serves as a coordination point for substrate. Aspartate 248 is a Zn(2+) binding site. Residue aspartate 248 is part of the active site. 2 residues coordinate substrate: histidine 252 and alanine 264.

This sequence belongs to the metallo-dependent hydrolases superfamily. DHOase family. Class II DHOase subfamily. In terms of assembly, homodimer. Zn(2+) serves as cofactor.

It carries out the reaction (S)-dihydroorotate + H2O = N-carbamoyl-L-aspartate + H(+). It participates in pyrimidine metabolism; UMP biosynthesis via de novo pathway; (S)-dihydroorotate from bicarbonate: step 3/3. Catalyzes the reversible cyclization of carbamoyl aspartate to dihydroorotate. The chain is Dihydroorotase from Alcanivorax borkumensis (strain ATCC 700651 / DSM 11573 / NCIMB 13689 / SK2).